The sequence spans 265 residues: Small ribosomal subunit protein uS5 (265 aa).

Low complexity predominate over residues 1-15 (MADTQPAQEAPAADA). The disordered stretch occupies residues 1–44 (MADTQPAQEAPAADAPRAERNFGRGRGGRGGRGRGRGGPGEEKE). Basic residues predominate over residues 26–35 (RGGRGGRGRG). An S5 DRBM domain is found at 88-151 (LHDEMMKIYP…IAAKLNIVPV (64 aa)). The disordered stretch occupies residues 245–265 (TEPSRDPTDEHGELLAEMTTA). Positions 246–258 (EPSRDPTDEHGEL) are enriched in basic and acidic residues.

It belongs to the universal ribosomal protein uS5 family.

Its function is as follows. Component of the ribosome, a large ribonucleoprotein complex responsible for the synthesis of proteins in the cell. The small ribosomal subunit (SSU) binds messenger RNAs (mRNAs) and translates the encoded message by selecting cognate aminoacyl-transfer RNA (tRNA) molecules. The large subunit (LSU) contains the ribosomal catalytic site termed the peptidyl transferase center (PTC), which catalyzes the formation of peptide bonds, thereby polymerizing the amino acids delivered by tRNAs into a polypeptide chain. The nascent polypeptides leave the ribosome through a tunnel in the LSU and interact with protein factors that function in enzymatic processing, targeting, and the membrane insertion of nascent chains at the exit of the ribosomal tunnel. Plays a role in the assembly and function of the 40S ribosomal subunit. Mutations in this protein affects the control of translational fidelity. Involved in nucleolar processing of pre-18S ribosomal RNA and ribosome assembly. The protein is Small ribosomal subunit protein uS5 of Leishmania amazonensis.